We begin with the raw amino-acid sequence, 366 residues long: Inhibin alpha chain (366 aa).

The first 18 residues, 1–18 (MVLHLLLFLLLTPQGGHS), serve as a signal peptide directing secretion. The propeptide occupies 19–61 (CQGLELARELVLAKVRALFLDALGPPAVTREGGDPGVRRLPRR). Positions 62-232 (HALGGFTHRG…PPSGGERARR (171 aa)) are cleaved as a propeptide — inhibin alpha N-terminal region. Asn-146 and Asn-268 each carry an N-linked (GlcNAc...) asparagine glycan. Cystine bridges form between Cys-262–Cys-328, Cys-291–Cys-363, and Cys-295–Cys-365. Asn-302 is a glycosylation site (N-linked (GlcNAc...) asparagine; partial).

Belongs to the TGF-beta family. In terms of assembly, dimeric, linked by one or more disulfide bonds. Activin B is a dimer of alpha and beta-B. Inhibin A is a dimer of alpha and beta-A. Inhibin B is a dimer of alpha and beta-B. Interacts with TGFBR3L; this interaction regulates female fertility. In terms of processing, proteolytic processing yields a number of bioactive forms. The 20/23 kDa forms consist solely of the mature alpha chain, the 26/29 kDa forms consist of the most N-terminal propeptide linked through a disulfide bond to the mature alpha chain, the 50/53 kDa forms encompass the entire proprotein. Each type can be furthermore either mono- or diglycosylated, causing the mass difference. In terms of tissue distribution, originally found in ovary (granulosa cells) and testis (Sertoli cells), but widely distributed in many tissues including brain and placenta. In adrenal cortex expression is limited to the zona reticularis and the innermost zona fasciculata in the normal gland, extending centripetally into the zona fasciculata in hyperplasia. Also found in adrenocortical tumors. Also expressed in prostate epithelium of benign prostatic hyperplasia, in regions of basal cell hyperplasia and in nonmalignant regions of high grade prostate cancer. Only circulating inhibin B is found in male, whereas circulating inhibins A and B are found in female.

It localises to the secreted. In terms of biological role, inhibins and activins inhibit and activate, respectively, the secretion of follitropin by the pituitary gland. Inhibins/activins are involved in regulating a number of diverse functions such as hypothalamic and pituitary hormone secretion, gonadal hormone secretion, germ cell development and maturation, erythroid differentiation, insulin secretion, nerve cell survival, embryonic axial development or bone growth, depending on their subunit composition. Inhibins appear to oppose the functions of activins. Inhibin A is a dimer of alpha/INHA and beta-A/INHBA that functions as a feedback regulator in the hypothalamic-pituitary-gonadal (HPG) axis. Inhibits the secretion of FSH from the anterior pituitary gland by acting on pituitary gonadotrope cells. Antagonizes activin A by binding to the proteoglycan, betaglycan, and forming a stable complex with and, thereby, sequestering type II activin receptors while excluding type I receptor. Functionally, inhibin B is a dimer of alpha and beta-B that plays a crucial role in the regulation of the reproductive system by inhibiting the secretion of follicle-stimulating hormone (FSH) from the anterior pituitary gland. Thereby, maintains reproductive homeostasis in both males and females. Acts as a more potent suppressor of FSH release than inhibin A. Functions as competitive receptor antagonist binding activin type II receptors with high affinity in the presence of the TGF-beta type III coreceptor/TGFBR3L. In Homo sapiens (Human), this protein is Inhibin alpha chain (INHA).